Here is a 285-residue protein sequence, read N- to C-terminus: HTH-type transcriptional regulator MurR (285 aa).

Residues 1–77 (MLYLTKISNA…MALIGEYSAS (77 aa)) form the HTH rpiR-type domain. The H-T-H motif DNA-binding region spans 37–56 (SRQMAKQLGISQSSIVKFAQ). The SIS domain maps to 128-268 (IIDVISKAQF…FVGLVQLNDV (141 aa)).

As to quaternary structure, homotetramer.

The protein operates within amino-sugar metabolism; N-acetylmuramate degradation [regulation]. Represses the expression of the murPQ operon involved in the uptake and degradation of N-acetylmuramic acid (MurNAc). Binds to two adjacent inverted repeats within the operator region. MurNAc 6-phosphate, the substrate of MurQ, is the specific inducer that weakens binding of MurR to the operator. The sequence is that of HTH-type transcriptional regulator MurR from Escherichia coli (strain B / BL21-DE3).